The sequence spans 1916 residues: Diacylglycerol kinase eta (1916 aa).

The disordered stretch occupies residues 1 to 36; the sequence is MAHIKLDTLDVVQRPGTTRRSNSNSGRSSACSSGSL. The span at 19–36 shows a compositional bias: low complexity; the sequence is RRSNSNSGRSSACSSGSL. Residues 82–175 enclose the PH domain; sequence AIIKEGFLLK…WLGSLKTATT (94 aa). 2 Phorbol-ester/DAG-type zinc fingers span residues 195-245 and 268-319; these read HHHW…IANC and PHQW…AVAC. The 137-residue stretch at 350-486 folds into the DAGKc domain; that stretch reads GNFSPLLVFV…DRWSIMVFEK (137 aa). Residues 623–644 show a composition bias toward basic and acidic residues; that stretch reads DEINTKERRSSRSLRSSEKEAL. Disordered stretches follow at residues 623-648, 846-874, 1018-1067, and 1183-1214; these read DEIN…QSRA, DRGK…KEDN, TLCS…DDNP, and TSTS…SVKP. An SAM domain is found at 1853-1916; it reads WSVNEVVTWL…LQAIKDLSEN (64 aa).

It belongs to the eukaryotic diacylglycerol kinase family.

The protein localises to the cytoplasm. It carries out the reaction a 1,2-diacyl-sn-glycerol + ATP = a 1,2-diacyl-sn-glycero-3-phosphate + ADP + H(+). Phosphorylates diacylglycerol (DAG) to generate phosphatidic acid (PA). The polypeptide is Diacylglycerol kinase eta (Drosophila ananassae (Fruit fly)).